Consider the following 1020-residue polypeptide: Neurofilament heavy polypeptide (1020 aa).

The tract at residues 1 to 100 is head; it reads MMSFGGADAL…VATSRSEKEQ (100 aa). The tract at residues 58 to 83 is disordered; it reads VSASPSRFRGAGAASSTDSLDTLSNG. The segment covering 71–82 has biased composition (polar residues); the sequence is ASSTDSLDTLSN. A phosphoserine mark is found at S76 and S124. Positions 97-413 constitute an IF rod domain; it reads EKEQLQALND…KLLEGEECRI (317 aa). Residues 101-132 form a coil 1A region; the sequence is LQALNDRFAGYIDKVRQLEAHNRSLEGEAAAL. The linker 1 stretch occupies residues 133 to 145; that stretch reads RQQQAGRSAMGEL. The segment at 146–244 is coil 1B; the sequence is YEREVREMRG…QEEVGELLGQ (99 aa). Residues 245–266 are linker 12; sequence IQGSGAAQAQMQAETRDALKCD. A coil 2A region spans residues 267-288; the sequence is VTSALREIRAQLEGHAVQSTLQ. Positions 289–292 are linker 2; it reads SEEW. A coil 2B region spans residues 293-413; that stretch reads FRVRLDRLSE…KLLEGEECRI (121 aa). 2 positions are modified to phosphoserine: S347 and S421. Residues 414-1020 are tail; it reads GFGPIPFSLP…ATEDKAAKGK (607 aa). Residues 456–1020 form a disordered region; sequence IVEEQTEETQ…ATEDKAAKGK (565 aa). 2 stretches are compositionally biased toward acidic residues: residues 459–475 and 483–498; these read EQTE…EEEE and GKEE…EGGE. Phosphoserine is present on residues S511, S526, S532, S540, S546, S552, S560, S566, S574, S580, S586, S594, S600, S606, S614, S620, S628, S634, S640, S648, S654, S662, S668, S676, S682, S690, S696, and S704. Residues 511–1020 show a composition bias toward basic and acidic residues; sequence SPEKEAKSPV…ATEDKAAKGK (510 aa). 4 repeat units span residues 525-530, 531-536, 539-544, and 545-550. Residues 525–826 are 30 X 6 AA repeats of K-S-P-[AEPV]-[EAK]-[AEVK]; the sequence is KSPAEAKSPE…KEEVKSPVKE (302 aa). The stretch at 559 to 564 is repeat 5; sequence KSPPEA. 2 repeat units span residues 573-578 and 579-584. 2 repeat units span residues 593 to 598 and 599 to 604. Residues 613–618 form repeat 10; it reads KSPAEA. 4 consecutive repeat copies span residues 627 to 632, 633 to 638, 639 to 644, and 647 to 652. A run of 12 repeats spans residues 661 to 666, 667 to 672, 675 to 680, 681 to 686, 689 to 694, 695 to 700, 703 to 708, 709 to 714, 717 to 722, 723 to 728, 737 to 742, and 745 to 750. A phosphoserine mark is found at S718, S724, and S738. S752 and S763 each carry phosphoserine. Copy 27 of the repeat occupies 762–767; the sequence is KSPEAK. T768 is modified (phosphothreonine). 3 repeat units span residues 786–791, 794–799, and 821–826. 4 positions are modified to phosphoserine: S787, S795, S822, and S888.

This sequence belongs to the intermediate filament family. As to quaternary structure, forms heterodimers with NEFL; which can further hetero-oligomerize (in vitro). Forms heterodimers with INA (in vitro). There are a number of repeats of the tripeptide K-S-P, NFH is phosphorylated on a number of the serines in this motif. It is thought that phosphorylation of NFH results in the formation of interfilament cross bridges that are important in the maintenance of axonal caliber. In terms of processing, phosphorylation seems to play a major role in the functioning of the larger neurofilament polypeptides (NF-M and NF-H), the levels of phosphorylation being altered developmentally and coincidentally with a change in the neurofilament function. Post-translationally, phosphorylated in the head and rod regions by the PKC kinase PKN1, leading to the inhibition of polymerization.

It is found in the cytoplasm. Its subcellular location is the cytoskeleton. It localises to the cell projection. The protein localises to the axon. Its function is as follows. Neurofilaments usually contain three intermediate filament proteins: NEFL, NEFM, and NEFH which are involved in the maintenance of neuronal caliber. NEFH has an important function in mature axons that is not subserved by the two smaller NF proteins. May additionally cooperate with the neuronal intermediate filament proteins PRPH and INA to form neuronal filamentous networks. This Homo sapiens (Human) protein is Neurofilament heavy polypeptide (NEFH).